The following is a 256-amino-acid chain: Glucosamine-6-phosphate deaminase (256 aa).

Asp68 functions as the Proton acceptor; for enolization step in the catalytic mechanism. The active-site For ring-opening step is the Asn137. The active-site Proton acceptor; for ring-opening step is His139. Catalysis depends on Glu144, which acts as the For ring-opening step.

The protein belongs to the glucosamine/galactosamine-6-phosphate isomerase family. NagB subfamily.

It carries out the reaction alpha-D-glucosamine 6-phosphate + H2O = beta-D-fructose 6-phosphate + NH4(+). Its pathway is amino-sugar metabolism; N-acetylneuraminate degradation; D-fructose 6-phosphate from N-acetylneuraminate: step 5/5. Functionally, catalyzes the reversible isomerization-deamination of glucosamine 6-phosphate (GlcN6P) to form fructose 6-phosphate (Fru6P) and ammonium ion. The chain is Glucosamine-6-phosphate deaminase from Mycoplasmopsis pulmonis (strain UAB CTIP) (Mycoplasma pulmonis).